The primary structure comprises 197 residues: FMN-dependent NADH:quinone oxidoreductase (197 aa).

Residues S10, 16–18 (SQS), 93–96 (MYNF), and 137–140 (TRGG) each bind FMN.

This sequence belongs to the azoreductase type 1 family. As to quaternary structure, homodimer. FMN is required as a cofactor.

It catalyses the reaction 2 a quinone + NADH + H(+) = 2 a 1,4-benzosemiquinone + NAD(+). The catalysed reaction is N,N-dimethyl-1,4-phenylenediamine + anthranilate + 2 NAD(+) = 2-(4-dimethylaminophenyl)diazenylbenzoate + 2 NADH + 2 H(+). Functionally, quinone reductase that provides resistance to thiol-specific stress caused by electrophilic quinones. Also exhibits azoreductase activity. Catalyzes the reductive cleavage of the azo bond in aromatic azo compounds to the corresponding amines. The chain is FMN-dependent NADH:quinone oxidoreductase from Shewanella frigidimarina (strain NCIMB 400).